The chain runs to 343 residues: Heat-inducible transcription repressor HrcA (343 aa).

The protein belongs to the HrcA family.

Functionally, negative regulator of class I heat shock genes (grpE-dnaK-dnaJ and groELS operons). Prevents heat-shock induction of these operons. The protein is Heat-inducible transcription repressor HrcA of Clostridium botulinum (strain Alaska E43 / Type E3).